The primary structure comprises 477 residues: Maternal protein exuperantia-2 (477 aa).

The segment covering 196-209 has biased composition (basic and acidic residues); that stretch reads KDGNSTKEDEHENP. Disordered stretches follow at residues 196–226 and 384–477; these read KDGNSTKEDEHENPEGNSSITDNSGHKNQKQ and TIKP…FADI. A compositionally biased stretch (basic residues) spans 385-402; that stretch reads IKPRCKRSGNGTRRRNRA.

In terms of biological role, ensures the proper localization of the mRNA of the bicoid gene to the anterior regions of the oocyte thus playing a fundamental role in the establishment of the polarity of the oocyte. May bind the bcd mRNA. The protein is Maternal protein exuperantia-2 (exu2) of Drosophila pseudoobscura pseudoobscura (Fruit fly).